A 212-amino-acid polypeptide reads, in one-letter code: Uridine kinase (212 aa).

13-20 (GGSGSGKT) serves as a coordination point for ATP.

Belongs to the uridine kinase family.

Its subcellular location is the cytoplasm. It catalyses the reaction uridine + ATP = UMP + ADP + H(+). The catalysed reaction is cytidine + ATP = CMP + ADP + H(+). The protein operates within pyrimidine metabolism; CTP biosynthesis via salvage pathway; CTP from cytidine: step 1/3. It participates in pyrimidine metabolism; UMP biosynthesis via salvage pathway; UMP from uridine: step 1/1. This Bacillus cereus (strain ATCC 10987 / NRS 248) protein is Uridine kinase.